Consider the following 706-residue polypeptide: DNA ligase (706 aa).

NAD(+)-binding positions include Asp-40–Asp-44, Ser-89–Ile-90, and Glu-120. Lys-122 functions as the N6-AMP-lysine intermediate in the catalytic mechanism. Residues Arg-143, Glu-190, Lys-306, and Lys-330 each coordinate NAD(+). 4 residues coordinate Zn(2+): Cys-424, Cys-427, Cys-442, and Cys-447. Residues Glu-625–Thr-706 form the BRCT domain.

This sequence belongs to the NAD-dependent DNA ligase family. LigA subfamily. Mg(2+) is required as a cofactor. Mn(2+) serves as cofactor.

The catalysed reaction is NAD(+) + (deoxyribonucleotide)n-3'-hydroxyl + 5'-phospho-(deoxyribonucleotide)m = (deoxyribonucleotide)n+m + AMP + beta-nicotinamide D-nucleotide.. Functionally, DNA ligase that catalyzes the formation of phosphodiester linkages between 5'-phosphoryl and 3'-hydroxyl groups in double-stranded DNA using NAD as a coenzyme and as the energy source for the reaction. It is essential for DNA replication and repair of damaged DNA. This chain is DNA ligase, found in Rhodopirellula baltica (strain DSM 10527 / NCIMB 13988 / SH1).